The chain runs to 458 residues: UDP-N-acetylmuramoylalanine--D-glutamate ligase (458 aa).

Position 119-125 (119-125 (GSNGKTT)) interacts with ATP.

Belongs to the MurCDEF family.

It is found in the cytoplasm. It carries out the reaction UDP-N-acetyl-alpha-D-muramoyl-L-alanine + D-glutamate + ATP = UDP-N-acetyl-alpha-D-muramoyl-L-alanyl-D-glutamate + ADP + phosphate + H(+). The protein operates within cell wall biogenesis; peptidoglycan biosynthesis. In terms of biological role, cell wall formation. Catalyzes the addition of glutamate to the nucleotide precursor UDP-N-acetylmuramoyl-L-alanine (UMA). The protein is UDP-N-acetylmuramoylalanine--D-glutamate ligase of Limosilactobacillus fermentum (strain NBRC 3956 / LMG 18251) (Lactobacillus fermentum).